Reading from the N-terminus, the 514-residue chain is F-box-like/WD repeat-containing protein TBL1XR1 (514 aa).

S2 carries the post-translational modification N-acetylserine. Residues 4–36 (SSDEVNFLVYRYLQESGFSHSAFTFGIESHISQ) enclose the LisH domain. An F-box-like domain is found at 41–86 (GALVPPAALISIIQKGLQYVEAEVSINEDGTLFDGRPIESLSLIDA). The residue at position 102 (K102) is an N6-acetyllysine. The disordered stretch occupies residues 114 to 139 (AAAATNQQGSAKNGENTANGEENGAH). Residues 124-135 (AKNGENTANGEE) show a composition bias toward low complexity. WD repeat units follow at residues 167-206 (GHES…TSGP), 223-262 (PSNK…ASTL), 264-303 (QHKG…AKQQ), 306-344 (FHSA…PIKT), 347-386 (GHTN…CVHD), 389-437 (AHNK…CIHT), 440-479 (KHQE…LVHS), and 481-513 (RGTG…LDLR). Residue K277 forms a Glycyl lysine isopeptide (Lys-Gly) (interchain with G-Cter in SUMO2) linkage.

It belongs to the WD repeat EBI family. In terms of assembly, component of the N-Cor repressor complex, at least composed of NCOR1, NCOR2, HDAC3, TBL1X, TBL1XR1, CORO2A and GPS2. Probable component of some E3 ubiquitin ligase complex. Interacts with histones H2B and H4. Interacts with MECP2; bridges interaction between MECP2 and NCOR1. Interacts with USP44.

It localises to the nucleus. Functionally, F-box-like protein involved in the recruitment of the ubiquitin/19S proteasome complex to nuclear receptor-regulated transcription units. Plays an essential role in transcription activation mediated by nuclear receptors. Probably acts as integral component of the N-Cor corepressor complex that mediates the recruitment of the 19S proteasome complex, leading to the subsequent proteasomal degradation of N-Cor complex, thereby allowing cofactor exchange, and transcription activation. The sequence is that of F-box-like/WD repeat-containing protein TBL1XR1 (Tbl1xr1) from Mus musculus (Mouse).